A 543-amino-acid chain; its full sequence is uncharacterized protein (543 aa).

The TRAM domain maps to 1-59 (MLKKNDIVEVEIVDLTHEGAGVAKVDGLVFFVENALPSEKILMRVLKVNKKIGFGKVEK). S-adenosyl-L-methionine contacts are provided by Q283, Y312, E333, and D381. C408 (nucleophile) is an active-site residue.

Belongs to the class I-like SAM-binding methyltransferase superfamily. RNA M5U methyltransferase family.

This is an uncharacterized protein from Streptococcus pneumoniae (strain ATCC BAA-255 / R6).